The chain runs to 102 residues: Small ribosomal subunit protein uS14 (102 aa).

This sequence belongs to the universal ribosomal protein uS14 family. As to quaternary structure, part of the 30S ribosomal subunit. Contacts proteins S3 and S10.

In terms of biological role, binds 16S rRNA, required for the assembly of 30S particles and may also be responsible for determining the conformation of the 16S rRNA at the A site. This Wolbachia pipientis wMel protein is Small ribosomal subunit protein uS14.